A 79-amino-acid polypeptide reads, in one-letter code: Cytochrome b (79 aa).

3 consecutive transmembrane segments (helical) span residues 1–7 (SALFLAM), 31–52 (WLIR…YLHI), and 67–79 (WNIG…LTMA). H37 and H51 together coordinate heme b.

This sequence belongs to the cytochrome b family. In terms of assembly, the cytochrome bc1 complex contains 11 subunits: 3 respiratory subunits (MT-CYB, CYC1 and UQCRFS1), 2 core proteins (UQCRC1 and UQCRC2) and 6 low-molecular weight proteins (UQCRH/QCR6, UQCRB/QCR7, UQCRQ/QCR8, UQCR10/QCR9, UQCR11/QCR10 and a cleavage product of UQCRFS1). This cytochrome bc1 complex then forms a dimer. It depends on heme b as a cofactor.

The protein localises to the mitochondrion inner membrane. In terms of biological role, component of the ubiquinol-cytochrome c reductase complex (complex III or cytochrome b-c1 complex) that is part of the mitochondrial respiratory chain. The b-c1 complex mediates electron transfer from ubiquinol to cytochrome c. Contributes to the generation of a proton gradient across the mitochondrial membrane that is then used for ATP synthesis. The protein is Cytochrome b (MT-CYB) of Dipodomys californicus (California kangaroo rat).